Reading from the N-terminus, the 289-residue chain is ATP synthase gamma chain (289 aa).

Belongs to the ATPase gamma chain family. F-type ATPases have 2 components, CF(1) - the catalytic core - and CF(0) - the membrane proton channel. CF(1) has five subunits: alpha(3), beta(3), gamma(1), delta(1), epsilon(1). CF(0) has three main subunits: a, b and c.

It localises to the cell inner membrane. In terms of biological role, produces ATP from ADP in the presence of a proton gradient across the membrane. The gamma chain is believed to be important in regulating ATPase activity and the flow of protons through the CF(0) complex. The chain is ATP synthase gamma chain from Azobacteroides pseudotrichonymphae genomovar. CFP2.